Consider the following 213-residue polypeptide: Kynurenine formamidase (213 aa).

Trp-15 provides a ligand contact to substrate. Zn(2+)-binding residues include His-45, His-49, and Asp-51. The active-site Proton donor/acceptor is His-55. 2 residues coordinate Zn(2+): His-157 and Glu-169.

The protein belongs to the Cyclase 1 superfamily. KynB family. In terms of assembly, homodimer. Zn(2+) is required as a cofactor.

The catalysed reaction is N-formyl-L-kynurenine + H2O = L-kynurenine + formate + H(+). It participates in amino-acid degradation; L-tryptophan degradation via kynurenine pathway; L-kynurenine from L-tryptophan: step 2/2. Its function is as follows. Catalyzes the hydrolysis of N-formyl-L-kynurenine to L-kynurenine, the second step in the kynurenine pathway of tryptophan degradation. The chain is Kynurenine formamidase from Deinococcus geothermalis (strain DSM 11300 / CIP 105573 / AG-3a).